Here is a 110-residue protein sequence, read N- to C-terminus: UPF0060 membrane protein Bcen_0802 (110 aa).

4 helical membrane passes run 9–29 (ALFAATALAEIVGCYLPWLVL), 34–54 (PAWLLVPAALSLALFAWLLTL), 66–86 (YGGVYIAVALIWLRVVDGVAL), and 88–108 (RWDVAGAVLALGGMAVIALQP).

This sequence belongs to the UPF0060 family.

The protein resides in the cell inner membrane. The chain is UPF0060 membrane protein Bcen_0802 from Burkholderia orbicola (strain AU 1054).